The chain runs to 497 residues: Protein nucleotidyltransferase YdiU (497 aa).

Residues Gly88, Gly90, Arg91, Lys110, Asp122, Gly123, Arg173, and Arg180 each coordinate ATP. Residue Asp249 is the Proton acceptor of the active site. Asn250 and Asp259 together coordinate Mg(2+). Asp259 serves as a coordination point for ATP. The tract at residues 477 to 497 (FARYAEPPEGGGRGYRTFCGT) is disordered.

Belongs to the SELO family. It depends on Mg(2+) as a cofactor. Requires Mn(2+) as cofactor.

The catalysed reaction is L-seryl-[protein] + ATP = 3-O-(5'-adenylyl)-L-seryl-[protein] + diphosphate. It carries out the reaction L-threonyl-[protein] + ATP = 3-O-(5'-adenylyl)-L-threonyl-[protein] + diphosphate. The enzyme catalyses L-tyrosyl-[protein] + ATP = O-(5'-adenylyl)-L-tyrosyl-[protein] + diphosphate. It catalyses the reaction L-histidyl-[protein] + UTP = N(tele)-(5'-uridylyl)-L-histidyl-[protein] + diphosphate. The catalysed reaction is L-seryl-[protein] + UTP = O-(5'-uridylyl)-L-seryl-[protein] + diphosphate. It carries out the reaction L-tyrosyl-[protein] + UTP = O-(5'-uridylyl)-L-tyrosyl-[protein] + diphosphate. In terms of biological role, nucleotidyltransferase involved in the post-translational modification of proteins. It can catalyze the addition of adenosine monophosphate (AMP) or uridine monophosphate (UMP) to a protein, resulting in modifications known as AMPylation and UMPylation. This chain is Protein nucleotidyltransferase YdiU, found in Methylorubrum extorquens (strain PA1) (Methylobacterium extorquens).